A 95-amino-acid polypeptide reads, in one-letter code: Large ribosomal subunit protein bL25 (95 aa).

Belongs to the bacterial ribosomal protein bL25 family. Part of the 50S ribosomal subunit; part of the 5S rRNA/L5/L18/L25 subcomplex. Contacts the 5S rRNA. Binds to the 5S rRNA independently of L5 and L18.

This is one of the proteins that binds to the 5S RNA in the ribosome where it forms part of the central protuberance. The polypeptide is Large ribosomal subunit protein bL25 (Actinobacillus succinogenes (strain ATCC 55618 / DSM 22257 / CCUG 43843 / 130Z)).